The following is a 123-amino-acid chain: Major pollen allergen Ole e 10 (123 aa).

Positions 1 to 21 (MRGTAGVPDQPVPTPTPSVPT) are cleaved as a signal peptide. Residues 1–37 (MRGTAGVPDQPVPTPTPSVPTSSSPVPKPPTQGNKKW) are disordered. Cys38 and Cys101 are oxidised to a cystine.

In terms of processing, the N-terminus is blocked. Post-translationally, phosphorylated at Ser-24 when expressed as a recombinant protein in a heterologous system. Not glycosylated. In terms of processing, contains two additional disulfide bonds. In terms of tissue distribution, expressed in mature and germinating pollen.

The protein localises to the cytoplasmic vesicle. In terms of biological role, carbohydrate-binding protein binding preferentially 1,3-beta-glucans. May be involved in pollen tube wall re-formation during germination. This is Major pollen allergen Ole e 10 from Olea europaea (Common olive).